The primary structure comprises 226 residues: Ribose-5-phosphate isomerase A (226 aa).

Substrate-binding positions include 25–28 (TGST), 81–84 (DGAD), and 94–97 (KGGG). Glu-103 (proton acceptor) is an active-site residue. Lys-121 provides a ligand contact to substrate.

It belongs to the ribose 5-phosphate isomerase family. In terms of assembly, homodimer.

It catalyses the reaction aldehydo-D-ribose 5-phosphate = D-ribulose 5-phosphate. It functions in the pathway carbohydrate degradation; pentose phosphate pathway; D-ribose 5-phosphate from D-ribulose 5-phosphate (non-oxidative stage): step 1/1. Catalyzes the reversible conversion of ribose-5-phosphate to ribulose 5-phosphate. The chain is Ribose-5-phosphate isomerase A from Enterococcus faecalis (strain ATCC 700802 / V583).